The sequence spans 159 residues: Small ribosomal subunit protein uS9 (159 aa).

Belongs to the universal ribosomal protein uS9 family.

The chain is Small ribosomal subunit protein uS9 from Rickettsia massiliae (strain Mtu5).